We begin with the raw amino-acid sequence, 1050 residues long: Self-sufficient cytochrome P450 monooxygenase CYP505E5 (1050 aa).

C405 contributes to the heme binding site. The disordered stretch occupies residues 461-495 (TATGLSRRSMLVARDGSSEESSNHPAEARGDHAPA). Residues 500 to 641 (VSFFYGSNSG…DLEAWEETSL (142 aa)) enclose the Flavodoxin-like domain. Residues 506–510 (SNSGT) and 585–617 (VFGC…TRLA) each bind FMN. The FAD-binding FR-type domain maps to 679–907 (KGLIEAKVTA…RPAKETFHLP (229 aa)).

The protein in the N-terminal section; belongs to the cytochrome P450 family. FAD serves as cofactor. Requires FMN as cofactor. Heme is required as a cofactor.

It carries out the reaction 2 oxidized [cytochrome P450] + NADPH = 2 reduced [cytochrome P450] + NADP(+) + H(+). The catalysed reaction is an organic molecule + reduced [NADPH--hemoprotein reductase] + O2 = an alcohol + oxidized [NADPH--hemoprotein reductase] + H2O + H(+). It catalyses the reaction dodecanoate + reduced [NADPH--hemoprotein reductase] + O2 = 5-hydroxydodecanoate + oxidized [NADPH--hemoprotein reductase] + H2O + H(+). The enzyme catalyses tetradecanoate + reduced [NADPH--hemoprotein reductase] + O2 = 7-hydroxytetradecanoate + oxidized [NADPH--hemoprotein reductase] + H2O + H(+). It carries out the reaction dodecan-1-ol + reduced [NADPH--hemoprotein reductase] + O2 = 1,5-dodecanediol + oxidized [NADPH--hemoprotein reductase] + H2O + H(+). The catalysed reaction is dodecan-1-ol + reduced [NADPH--hemoprotein reductase] + O2 = 1,4-dodecanediol + oxidized [NADPH--hemoprotein reductase] + H2O + H(+). It catalyses the reaction dodecan-1-ol + reduced [NADPH--hemoprotein reductase] + O2 = 1,6-dodecanediol + oxidized [NADPH--hemoprotein reductase] + H2O + H(+). Its function is as follows. Self-sufficient cytochrome P450 monooxygenase that catalyzes the regioselective in-chain hydroxylation of alkanes, fatty alcohols, and fatty acids at the omega-7 position. Performs hydroxylation of C10-C16 n-alkanes and C12 and C14 fatty alcohols; and thereby enables the one step biocatalytic synthesis of rare alcohols such as 5-dodecanol and 7-tetradecanol. Converts 1-dodecanol into 1,5-dodecanediol as major product with very little sub-terminally hydroxylated products with the 1,4-dodecanediol and 1,6-dodecanediol more abundant. Converts dodecanoic acid to 5-hydroxydodecanoic acid which can be further converted into delta-dodecalactone by lactonization of the 5-hydroxy acid at low pH. Also gives sub-terminal hydroxylation of dodecanoic acid with 9-hydroxydodecanoic acid being the second most abundant product. In Aspergillus kawachii (strain NBRC 4308) (White koji mold), this protein is Self-sufficient cytochrome P450 monooxygenase CYP505E5.